Here is a 124-residue protein sequence, read N- to C-terminus: Small ribosomal subunit protein uS12 (124 aa).

A 3-methylthioaspartic acid modification is found at Asp-89.

Belongs to the universal ribosomal protein uS12 family. As to quaternary structure, part of the 30S ribosomal subunit. Contacts proteins S8 and S17. May interact with IF1 in the 30S initiation complex.

Its function is as follows. With S4 and S5 plays an important role in translational accuracy. In terms of biological role, interacts with and stabilizes bases of the 16S rRNA that are involved in tRNA selection in the A site and with the mRNA backbone. Located at the interface of the 30S and 50S subunits, it traverses the body of the 30S subunit contacting proteins on the other side and probably holding the rRNA structure together. The combined cluster of proteins S8, S12 and S17 appears to hold together the shoulder and platform of the 30S subunit. The sequence is that of Small ribosomal subunit protein uS12 from Thermoanaerobacter pseudethanolicus (strain ATCC 33223 / 39E) (Clostridium thermohydrosulfuricum).